A 290-amino-acid polypeptide reads, in one-letter code: Oxaloacetate decarboxylase (290 aa).

Position 53 (S53) interacts with substrate. Position 91 (D91) interacts with Mg(2+). Substrate is bound by residues R162 and H238.

Belongs to the isocitrate lyase/PEP mutase superfamily. Oxaloacetate decarboxylase family. In terms of assembly, homotetramer; dimer of dimers. The cofactor is Mg(2+).

It catalyses the reaction oxaloacetate + H(+) = pyruvate + CO2. Its function is as follows. Catalyzes the decarboxylation of oxaloacetate into pyruvate. Seems to play a role in maintaining cellular concentrations of bicarbonate and pyruvate. This chain is Oxaloacetate decarboxylase, found in Ectopseudomonas mendocina (strain ymp) (Pseudomonas mendocina).